The sequence spans 596 residues: Elongation factor 4 (596 aa).

The tr-type G domain occupies 2-183 (ENIRNFSIIA…AIIERIPAPS (182 aa)). GTP contacts are provided by residues 14–19 (DHGKST) and 130–133 (NKID).

Belongs to the TRAFAC class translation factor GTPase superfamily. Classic translation factor GTPase family. LepA subfamily.

It is found in the cell inner membrane. It carries out the reaction GTP + H2O = GDP + phosphate + H(+). Functionally, required for accurate and efficient protein synthesis under certain stress conditions. May act as a fidelity factor of the translation reaction, by catalyzing a one-codon backward translocation of tRNAs on improperly translocated ribosomes. Back-translocation proceeds from a post-translocation (POST) complex to a pre-translocation (PRE) complex, thus giving elongation factor G a second chance to translocate the tRNAs correctly. Binds to ribosomes in a GTP-dependent manner. The sequence is that of Elongation factor 4 from Nitratiruptor sp. (strain SB155-2).